The sequence spans 432 residues: Adenylosuccinate synthetase (432 aa).

GTP-binding positions include 12–18 (GDEGKGK) and 40–42 (GHT). Catalysis depends on Asp-13, which acts as the Proton acceptor. The Mg(2+) site is built by Asp-13 and Gly-40. IMP-binding positions include 13 to 16 (DEGK), 38 to 41 (NAGH), Thr-129, Arg-143, Gln-224, Thr-239, and Arg-303. His-41 serves as the catalytic Proton donor. 299–305 (VTTGRRR) contributes to the substrate binding site. Residues Arg-305, 331-333 (KLD), and 413-415 (GVG) each bind GTP.

This sequence belongs to the adenylosuccinate synthetase family. Homodimer. It depends on Mg(2+) as a cofactor.

It is found in the cytoplasm. The catalysed reaction is IMP + L-aspartate + GTP = N(6)-(1,2-dicarboxyethyl)-AMP + GDP + phosphate + 2 H(+). It functions in the pathway purine metabolism; AMP biosynthesis via de novo pathway; AMP from IMP: step 1/2. Its function is as follows. Plays an important role in the de novo pathway of purine nucleotide biosynthesis. Catalyzes the first committed step in the biosynthesis of AMP from IMP. The chain is Adenylosuccinate synthetase from Mycolicibacterium paratuberculosis (strain ATCC BAA-968 / K-10) (Mycobacterium paratuberculosis).